Reading from the N-terminus, the 420-residue chain is MSSKELFELAAKLFPMGVNSPVRYFKDYPFYVKEGKGSTILDVDGNKYIDYCLGYGPLILGHSDPDVTRAVIEQAEKGLLFGEPSENEIKLAEMIKETSKNIEMMRFTNSGTEATMHAIRLARAITGRKLIVKMEGGFHGAHDYSLIKSGSGTLTFGSPSSPGIPDEVAQTVIVGKYNDENNIKEIFQKYGDKIAAVITEPIMGNAGVILPKQGFLEFLRDITQKHGSLLIFDEVITGYRFAFSPFQDIMRIDPDITTMGKIIGGGLPIGLFGGSEEIMKNISPSGNVYEAGTFSGNPMSMAAGYAAMEKLSKQDYSILKKRTQKLVSGIDDILDRKHITHTIKYYGTMFQVFFADHVNNYDDALKARKEVYFKLFKALSKNGVYLPPSQYETNFVSFAHSDSDIDATLAAFEKAVAEMD.

The residue at position 261 (Lys-261) is an N6-(pyridoxal phosphate)lysine.

The protein belongs to the class-III pyridoxal-phosphate-dependent aminotransferase family. HemL subfamily. Pyridoxal 5'-phosphate serves as cofactor.

Its subcellular location is the cytoplasm. It catalyses the reaction (S)-4-amino-5-oxopentanoate = 5-aminolevulinate. It functions in the pathway porphyrin-containing compound metabolism; protoporphyrin-IX biosynthesis; 5-aminolevulinate from L-glutamyl-tRNA(Glu): step 2/2. The sequence is that of Glutamate-1-semialdehyde 2,1-aminomutase from Thermoplasma volcanium (strain ATCC 51530 / DSM 4299 / JCM 9571 / NBRC 15438 / GSS1).